The primary structure comprises 301 residues: Protoheme IX farnesyltransferase (301 aa).

Transmembrane regions (helical) follow at residues 29-49, 51-71, 101-121, 123-143, 150-170, 177-197, 223-243, 244-264, and 281-301; these read VVAL…PGAV, LQPL…AAAF, AFSF…WWVN, LTAW…TAYL, NIVI…TAVT, ALLL…ALAI, CILL…LVGM, SGPV…YKAW, and FSIY…YLWG.

The protein belongs to the UbiA prenyltransferase family. Protoheme IX farnesyltransferase subfamily.

The protein localises to the cell inner membrane. The enzyme catalyses heme b + (2E,6E)-farnesyl diphosphate + H2O = Fe(II)-heme o + diphosphate. It functions in the pathway porphyrin-containing compound metabolism; heme O biosynthesis; heme O from protoheme: step 1/1. In terms of biological role, converts heme B (protoheme IX) to heme O by substitution of the vinyl group on carbon 2 of heme B porphyrin ring with a hydroxyethyl farnesyl side group. The polypeptide is Protoheme IX farnesyltransferase (Shewanella denitrificans (strain OS217 / ATCC BAA-1090 / DSM 15013)).